A 497-amino-acid polypeptide reads, in one-letter code: Cysteine--tRNA ligase (497 aa).

A Zn(2+)-binding site is contributed by cysteine 32. Residues 34–44 (PTVYGEGHLGH) carry the 'HIGH' region motif. Cysteine 228, histidine 253, and glutamate 257 together coordinate Zn(2+). The 'KMSKS' region motif lies at 285 to 289 (KMGKS). Lysine 288 lines the ATP pocket.

This sequence belongs to the class-I aminoacyl-tRNA synthetase family. In terms of assembly, monomer. It depends on Zn(2+) as a cofactor.

The protein localises to the cytoplasm. It catalyses the reaction tRNA(Cys) + L-cysteine + ATP = L-cysteinyl-tRNA(Cys) + AMP + diphosphate. The chain is Cysteine--tRNA ligase from Cytophaga hutchinsonii (strain ATCC 33406 / DSM 1761 / CIP 103989 / NBRC 15051 / NCIMB 9469 / D465).